Here is a 221-residue protein sequence, read N- to C-terminus: MDNFTVGVVVFPGSNCDRDVSWALEGCLDIRTKYLWHESSDLSDVDAIVLPGGFSYGDYLRCGAIARFSPLINALDEFVKSGKRVLGICNGFQILTESGFLPGALVANKNLNFICDDVELDIVSTKGGWFNNGDEKQTIKLPIAHGEGRYHCDSDTLKKLVDNELIALRYKNNPNGSSFDIAGITNEKGNVLGLMPHPERACDETIGGTDGLFTLKSLILK.

Residues valine 6–lysine 221 form the Glutamine amidotransferase type-1 domain. Cysteine 89 serves as the catalytic Nucleophile. Catalysis depends on residues histidine 197 and glutamate 199.

Part of the FGAM synthase complex composed of 1 PurL, 1 PurQ and 2 PurS subunits.

The protein localises to the cytoplasm. The catalysed reaction is N(2)-formyl-N(1)-(5-phospho-beta-D-ribosyl)glycinamide + L-glutamine + ATP + H2O = 2-formamido-N(1)-(5-O-phospho-beta-D-ribosyl)acetamidine + L-glutamate + ADP + phosphate + H(+). It catalyses the reaction L-glutamine + H2O = L-glutamate + NH4(+). It participates in purine metabolism; IMP biosynthesis via de novo pathway; 5-amino-1-(5-phospho-D-ribosyl)imidazole from N(2)-formyl-N(1)-(5-phospho-D-ribosyl)glycinamide: step 1/2. Part of the phosphoribosylformylglycinamidine synthase complex involved in the purines biosynthetic pathway. Catalyzes the ATP-dependent conversion of formylglycinamide ribonucleotide (FGAR) and glutamine to yield formylglycinamidine ribonucleotide (FGAM) and glutamate. The FGAM synthase complex is composed of three subunits. PurQ produces an ammonia molecule by converting glutamine to glutamate. PurL transfers the ammonia molecule to FGAR to form FGAM in an ATP-dependent manner. PurS interacts with PurQ and PurL and is thought to assist in the transfer of the ammonia molecule from PurQ to PurL. This chain is Phosphoribosylformylglycinamidine synthase subunit PurQ, found in Prochlorococcus marinus (strain MIT 9312).